The following is a 122-amino-acid chain: Large ribosomal subunit protein uL14 (122 aa).

Belongs to the universal ribosomal protein uL14 family. In terms of assembly, part of the 50S ribosomal subunit. Forms a cluster with proteins L3 and L19. In the 70S ribosome, L14 and L19 interact and together make contacts with the 16S rRNA in bridges B5 and B8.

In terms of biological role, binds to 23S rRNA. Forms part of two intersubunit bridges in the 70S ribosome. This Cereibacter sphaeroides (strain ATCC 17029 / ATH 2.4.9) (Rhodobacter sphaeroides) protein is Large ribosomal subunit protein uL14.